The primary structure comprises 419 residues: Oxamate carbamoyltransferase subunit AllG (419 aa).

This sequence belongs to the AllG family. In terms of assembly, the OXTCase is composed of 3 subunits, AllF, AllG and AllH. It depends on Mg(2+) as a cofactor.

It carries out the reaction oxamate + carbamoyl phosphate = N-carbamoyl-2-oxoglycine + phosphate. Its pathway is nitrogen metabolism; (S)-allantoin degradation. Component of a carbamoyltransferase involved in the anaerobic nitrogen utilization via the assimilation of allantoin. Catalyzes the conversion of oxalurate (N-carbamoyl-2-oxoglycine) to oxamate and carbamoyl phosphate. The sequence is that of Oxamate carbamoyltransferase subunit AllG from Escherichia coli (strain K12).